Reading from the N-terminus, the 174-residue chain is Large ribosomal subunit protein uL10 (174 aa).

It belongs to the universal ribosomal protein uL10 family. As to quaternary structure, part of the ribosomal stalk of the 50S ribosomal subunit. The N-terminus interacts with L11 and the large rRNA to form the base of the stalk. The C-terminus forms an elongated spine to which L12 dimers bind in a sequential fashion forming a multimeric L10(L12)X complex.

In terms of biological role, forms part of the ribosomal stalk, playing a central role in the interaction of the ribosome with GTP-bound translation factors. The polypeptide is Large ribosomal subunit protein uL10 (Acidiphilium cryptum (strain JF-5)).